A 781-amino-acid polypeptide reads, in one-letter code: Mitochondrial inner membrane m-AAA protease component paraplegin (781 aa).

Residues Met1–Tyr43 constitute a mitochondrion transit peptide. Residues Val44–Gly105 constitute a propeptide, removed in mature form. The segment at Gly105 to Glu134 is disordered. At Leu106–Thr144 the chain is on the mitochondrial matrix side. Residues Lys109–Glu134 are compositionally biased toward basic and acidic residues. A helical transmembrane segment spans residues Leu145–Ile165. Residues Ser166 to Thr248 lie on the Mitochondrial intermembrane side of the membrane. Residues Gly249–Trp269 traverse the membrane as a helical segment. The Mitochondrial matrix portion of the chain corresponds to Tyr270–Pro781. Residues Ala312, Gly352, Cys353, Gly354, Lys355, Thr356, and Leu357 each coordinate ATP. At Tyr505 the chain carries 3'-nitrotyrosine. His574 provides a ligand contact to Zn(2+). Glu575 is a catalytic residue. Zn(2+) is bound by residues His578 and Asp650. The interaction with PPIF stretch occupies residues His701–Pro781.

This sequence in the N-terminal section; belongs to the AAA ATPase family. In the C-terminal section; belongs to the peptidase M41 family. In terms of assembly, forms heterooligomers with AFG3L2; the m-AAA protease is composed of heterohexamers of AFG3L2 and SPG7. Component of the mitochondrial permeability transition pore complex (mPTPC), at least composed of SPG7, VDAC1 and PPIF. Interacts with MAIP1. It depends on Zn(2+) as a cofactor. In terms of processing, upon import into the mitochondrion, the N-terminal transit peptide is cleaved by the mitochondrial-processing peptidase (MPP) to generate an intermediate form which undergoes a second proteolytic cleavage mediated by proteases AFG3L2 removing an additional N-terminal fragment to generate the proteolytically active mature form.

The protein localises to the mitochondrion inner membrane. It carries out the reaction ATP + H2O = ADP + phosphate + H(+). Its function is as follows. Catalytic component of the m-AAA protease, a protease that plays a key role in proteostasis of inner mitochondrial membrane proteins, and which is essential for axonal and neuron development. SPG7 possesses both ATPase and protease activities: the ATPase activity is required to unfold substrates, threading them into the internal proteolytic cavity for hydrolysis into small peptide fragments. The m-AAA protease exerts a dual role in the mitochondrial inner membrane: it mediates the processing of specific regulatory proteins and ensures protein quality control by degrading misfolded polypeptides. Mediates protein maturation of the mitochondrial ribosomal subunit MRPL32/bL32m by catalyzing the cleavage of the presequence of MRPL32/bL32m prior to assembly into the mitochondrial ribosome. Acts as a regulator of calcium in neurons by mediating degradation of SMDT1/EMRE before its assembly with the uniporter complex, limiting the availability of SMDT1/EMRE for MCU assembly and promoting efficient assembly of gatekeeper subunits with MCU. Also regulates mitochondrial calcium by catalyzing degradation of MCU. Plays a role in the formation and regulation of the mitochondrial permeability transition pore (mPTP) and its proteolytic activity is dispensable for this function. In Rattus norvegicus (Rat), this protein is Mitochondrial inner membrane m-AAA protease component paraplegin (Spg7).